We begin with the raw amino-acid sequence, 508 residues long: tRNA-2-methylthio-N(6)-dimethylallyladenosine synthase (508 aa).

Residues 1–21 (MNEEQRKASGQVSSSDKKSEK) are disordered. Positions 65–183 (RKFYIRTYGC…LPELLSECYL (119 aa)) constitute an MTTase N-terminal domain. [4Fe-4S] cluster-binding residues include C74, C110, C144, C220, C224, and C227. Residues 206 to 436 (RQGKIKGWVN…NALVNEISAK (231 aa)) form the Radical SAM core domain. The TRAM domain occupies 439–502 (KEYEGQTVEV…TWSLDGEMVG (64 aa)).

It belongs to the methylthiotransferase family. MiaB subfamily. As to quaternary structure, monomer. The cofactor is [4Fe-4S] cluster.

The protein resides in the cytoplasm. It catalyses the reaction N(6)-dimethylallyladenosine(37) in tRNA + (sulfur carrier)-SH + AH2 + 2 S-adenosyl-L-methionine = 2-methylsulfanyl-N(6)-dimethylallyladenosine(37) in tRNA + (sulfur carrier)-H + 5'-deoxyadenosine + L-methionine + A + S-adenosyl-L-homocysteine + 2 H(+). Catalyzes the methylthiolation of N6-(dimethylallyl)adenosine (i(6)A), leading to the formation of 2-methylthio-N6-(dimethylallyl)adenosine (ms(2)i(6)A) at position 37 in tRNAs that read codons beginning with uridine. The sequence is that of tRNA-2-methylthio-N(6)-dimethylallyladenosine synthase from Bacillus pumilus (strain SAFR-032).